Reading from the N-terminus, the 140-residue chain is MQEVKQWPVKIMLVHPKAPFLKGEKIVIAADCAVLVNRDIRDRFESDAVIIGCPMLEDPRRMFERIKMIVAESDAKLEVYTMEVPCCHALHLMVEKAKEEHGKQTESEKYIVRVSGAVEPYSKKIDESMIEAERRAHRGH.

This is an uncharacterized protein from Archaeoglobus fulgidus (strain ATCC 49558 / DSM 4304 / JCM 9628 / NBRC 100126 / VC-16).